Here is an 845-residue protein sequence, read N- to C-terminus: Beta-mannosidase B (845 aa).

The tract at residues 1 to 20 is disordered; sequence MSKLQQFPLSKGWSFRDSED. A glycan (N-linked (GlcNAc...) asparagine) is linked at Asn-252. Glu-432 functions as the Proton donor in the catalytic mechanism. Residues Asn-717 and Asn-723 are each glycosylated (N-linked (GlcNAc...) asparagine).

This sequence belongs to the glycosyl hydrolase 2 family. Beta-mannosidase B subfamily.

The enzyme catalyses Hydrolysis of terminal, non-reducing beta-D-mannose residues in beta-D-mannosides.. Its pathway is glycan metabolism; N-glycan degradation. Its function is as follows. Exoglycosidase that cleaves the single beta-linked mannose residue from the non-reducing end of beta-mannosidic oligosaccharides of various complexity and length. Prefers mannobiose over mannotriose and has no activity against polymeric mannan. Is also severely restricted by galactosyl substitutions at the +1 subsite. This Neosartorya fischeri (strain ATCC 1020 / DSM 3700 / CBS 544.65 / FGSC A1164 / JCM 1740 / NRRL 181 / WB 181) (Aspergillus fischerianus) protein is Beta-mannosidase B (mndB).